The sequence spans 396 residues: MKSLVFNPFSGAAGDMILGCALDLGADRGEVKELIESSAPVSMDIREVVKKGIKALDVRINVPEKEYFRTYPEIVDLVKASKLPSKVEASALDIFLKMAEAEAAVHGQPDLEKLHFHEVGQSDALADVIGSSAAIHSLNCDSVYCTPINVGSGTIECAHGTLPVPAPATLEILRRGKLYFRGGNVNKELLTPTGAAILAHFAKPVDNFPQGRAVAIGYGAGDAELQGPNVLQGVLIEPDSHLVPDIIEVLETNADDVSGEVLGNLFEELLSMGARDVAIMPATMKKGRPAHIIKVIAKPEDSAKLARKIIVETGSLGVRVMPARHRLTASRNIERIKIDLEGQEFETAVKIARDSEGVLLNISAEFEDCKKIAKTSGVPVREVMRRAEEAARKLFS.

This sequence belongs to the LarC family.

The sequence is that of Putative nickel insertion protein from Methanosarcina mazei (strain ATCC BAA-159 / DSM 3647 / Goe1 / Go1 / JCM 11833 / OCM 88) (Methanosarcina frisia).